The sequence spans 372 residues: N-methyl-L-tryptophan oxidase (372 aa).

4–34 contacts FAD; the sequence is DLIIIGSGSVGAAAGYYATRAGLNVLMTDAH. Cys308 carries the S-8alpha-FAD cysteine modification.

It belongs to the MSOX/MTOX family. MTOX subfamily. Monomer. The cofactor is FAD.

The catalysed reaction is N(alpha)-methyl-L-tryptophan + O2 + H2O = L-tryptophan + formaldehyde + H2O2. Its function is as follows. Catalyzes the oxidative demethylation of N-methyl-L-tryptophan. The protein is N-methyl-L-tryptophan oxidase of Escherichia coli (strain K12 / DH10B).